Consider the following 550-residue polypeptide: Arginine--tRNA ligase (550 aa).

The 'HIGH' region signature appears at alanine 130–glycine 140.

This sequence belongs to the class-I aminoacyl-tRNA synthetase family. In terms of assembly, monomer.

It is found in the cytoplasm. It carries out the reaction tRNA(Arg) + L-arginine + ATP = L-arginyl-tRNA(Arg) + AMP + diphosphate. This is Arginine--tRNA ligase from Mycolicibacterium gilvum (strain PYR-GCK) (Mycobacterium gilvum (strain PYR-GCK)).